The primary structure comprises 121 residues: Protein YxiB (121 aa).

This is Protein YxiB (yxiB) from Bacillus subtilis (strain 168).